The chain runs to 122 residues: Insulin-like 3 (122 aa).

Positions 1 to 15 are cleaved as a signal peptide; that stretch reads MRAPLLLMLLALGSA. Intrachain disulfides connect C29-C107, C41-C120, and C106-C111.

Belongs to the insulin family. Heterodimer of a B chain and an A chain linked by two disulfide bonds. As to expression, expressed exclusively in Leydig cells of the testis.

It is found in the secreted. Seems to play a role in testicular function. May be a trophic hormone with a role in testicular descent in fetal life. Is a ligand for LGR8 receptor. This chain is Insulin-like 3 (Insl3), found in Mus musculus (Mouse).